The following is a 495-amino-acid chain: Glycerol kinase (495 aa).

Threonine 11 is an ADP binding site. ATP contacts are provided by threonine 11, threonine 12, and serine 13. Threonine 11 lines the sn-glycerol 3-phosphate pocket. Position 15 (arginine 15) interacts with ADP. The sn-glycerol 3-phosphate site is built by arginine 81, glutamate 82, tyrosine 133, and aspartate 242. Arginine 81, glutamate 82, tyrosine 133, aspartate 242, and glutamine 243 together coordinate glycerol. The ADP site is built by threonine 264 and glycine 307. Threonine 264, glycine 307, glutamine 311, and glycine 408 together coordinate ATP. Residues glycine 408 and asparagine 412 each contribute to the ADP site.

Belongs to the FGGY kinase family.

The enzyme catalyses glycerol + ATP = sn-glycerol 3-phosphate + ADP + H(+). It functions in the pathway polyol metabolism; glycerol degradation via glycerol kinase pathway; sn-glycerol 3-phosphate from glycerol: step 1/1. With respect to regulation, inhibited by fructose 1,6-bisphosphate (FBP). Functionally, key enzyme in the regulation of glycerol uptake and metabolism. Catalyzes the phosphorylation of glycerol to yield sn-glycerol 3-phosphate. This chain is Glycerol kinase, found in Rhodospirillum rubrum (strain ATCC 11170 / ATH 1.1.1 / DSM 467 / LMG 4362 / NCIMB 8255 / S1).